A 476-amino-acid chain; its full sequence is F-box protein At5g07670 (476 aa).

The region spanning 59-111 (PDFTLLLPDLILIRVIQKIPNSQRKNLSLVCKRWFRLHGRLVRSFKVSDWEFL) is the F-box domain.

This chain is F-box protein At5g07670, found in Arabidopsis thaliana (Mouse-ear cress).